Reading from the N-terminus, the 461-residue chain is Chromosomal replication initiator protein DnaA (461 aa).

The tract at residues 1 to 83 is domain I, interacts with DnaA modulators; it reads MTASLWQQCL…LHFAVGRRPT (83 aa). Residues 83-124 are domain II; the sequence is TAATVQMNTAAAPVADVRIGPAITVPSWTSKQDAMPEINHKS. The tract at residues 125 to 341 is domain III, AAA+ region; the sequence is NINETYTFEN…GALNRVIANA (217 aa). 4 residues coordinate ATP: Gly-169, Gly-171, Lys-172, and Thr-173. Residues 342–461 form a domain IV, binds dsDNA region; it reads RFTGKPINID…YSNLIRTLSS (120 aa).

The protein belongs to the DnaA family. As to quaternary structure, oligomerizes as a right-handed, spiral filament on DNA at oriC.

It localises to the cytoplasm. In terms of biological role, plays an essential role in the initiation and regulation of chromosomal replication. ATP-DnaA binds to the origin of replication (oriC) to initiate formation of the DNA replication initiation complex once per cell cycle. Binds the DnaA box (a 9 base pair repeat at the origin) and separates the double-stranded (ds)DNA. Forms a right-handed helical filament on oriC DNA; dsDNA binds to the exterior of the filament while single-stranded (ss)DNA is stabiized in the filament's interior. The ATP-DnaA-oriC complex binds and stabilizes one strand of the AT-rich DNA unwinding element (DUE), permitting loading of DNA polymerase. After initiation quickly degrades to an ADP-DnaA complex that is not apt for DNA replication. Binds acidic phospholipids. The polypeptide is Chromosomal replication initiator protein DnaA (Tolumonas auensis (strain DSM 9187 / NBRC 110442 / TA 4)).